A 394-amino-acid chain; its full sequence is Fatty acid resistance protein FarA (394 aa).

A disordered region spans residues 1 to 23 (MKSGNSEPNLMETHTDETKLQNT). A helical transmembrane segment spans residues 33 to 53 (ALTLLFALSAAAAGSAFFLWW). The tract at residues 356-376 (SAAGAPVSKTPGAALPEMEST) is disordered.

It belongs to the membrane fusion protein (MFP) (TC 8.A.1) family. Probably part of a tripartite efflux system FarAB-MtrE, which is composed of an inner membrane transporter, FarB, a periplasmic membrane fusion protein, FarA, and an outer membrane component, MtrE.

It is found in the cell inner membrane. In terms of biological role, mediates resistance to long-chained antibacterial fatty acids (FAs). Function is dependent on the MtrE outer membrane protein. In Neisseria gonorrhoeae, this protein is Fatty acid resistance protein FarA.